The primary structure comprises 369 residues: Putative 2-aminoethylphosphonate import ATP-binding protein PhnT (369 aa).

The ABC transporter domain occupies 19–250; that stretch reads IVLDSLRVAY…PPNRFAAEFL (232 aa). 51 to 58 provides a ligand contact to ATP; it reads GPSGSGKT.

The protein belongs to the ABC transporter superfamily. 2-aminoethylphosphonate importer (TC 3.A.1.11.5) family.

The protein resides in the cell inner membrane. Functionally, probably part of the PhnSTUV complex (TC 3.A.1.11.5) involved in 2-aminoethylphosphonate import. Probably responsible for energy coupling to the transport system. In Salmonella typhimurium (strain LT2 / SGSC1412 / ATCC 700720), this protein is Putative 2-aminoethylphosphonate import ATP-binding protein PhnT (phnT).